The primary structure comprises 200 residues: Recombination protein RecR (200 aa).

The C4-type zinc finger occupies 57–72 (CSECRTFTEEDTCAIC). A Toprim domain is found at 81-176 (GELCIVESPA…SASRIAHGVP (96 aa)).

This sequence belongs to the RecR family.

In terms of biological role, may play a role in DNA repair. It seems to be involved in an RecBC-independent recombinational process of DNA repair. It may act with RecF and RecO. This Aliivibrio salmonicida (strain LFI1238) (Vibrio salmonicida (strain LFI1238)) protein is Recombination protein RecR.